Reading from the N-terminus, the 299-residue chain is Nucleotide-binding protein SCO1952 (299 aa).

23-30 serves as a coordination point for ATP; it reads GMSGAGRS. 74-77 lines the GTP pocket; the sequence is DVRG.

This sequence belongs to the RapZ-like family.

Its function is as follows. Displays ATPase and GTPase activities. In Streptomyces coelicolor (strain ATCC BAA-471 / A3(2) / M145), this protein is Nucleotide-binding protein SCO1952.